The chain runs to 840 residues: Cytosolic carboxypeptidase 2 (840 aa).

Residues 358–628 (YPYTYTDLQC…HVCDTLLDFC (271 aa)) form the Peptidase M14 domain. Zn(2+) is bound by residues histidine 424, glutamate 427, and histidine 520. The active-site Proton donor/acceptor is the glutamate 592. Over residues 706–719 (MFKKKKKKSLQTRK) the composition is skewed to basic residues. Disordered regions lie at residues 706–726 (MFKKKKKKSLQTRKQRNEQYQ) and 758–789 (ESSSFLPMRNENPRLNETNLNRRDKDTSLDPS).

It belongs to the peptidase M14 family. As to quaternary structure, interacts with RARRES1, KIF11 and MAPRE1. It depends on Zn(2+) as a cofactor.

The protein localises to the cytoplasm. The protein resides in the cytosol. Its subcellular location is the cytoskeleton. It localises to the microtubule organizing center. It is found in the centrosome. The protein localises to the centriole. The protein resides in the cilium basal body. It carries out the reaction (L-glutamyl)(n+1)-gamma-L-glutamyl-L-glutamyl-[protein] + H2O = (L-glutamyl)(n)-gamma-L-glutamyl-L-glutamyl-[protein] + L-glutamate. Inhibited by RARRES1. Metallocarboxypeptidase that mediates deglutamylation of tubulin and non-tubulin target proteins. Catalyzes the removal of polyglutamate side chains present on the gamma-carboxyl group of glutamate residues within the C-terminal tail of tubulin protein. Specifically cleaves tubulin long-side-chains, while it is not able to remove the branching point glutamate. Also catalyzes the removal of polyglutamate residues from the carboxy-terminus of non-tubulin proteins such as MYLK. The chain is Cytosolic carboxypeptidase 2 (AGBL2) from Macaca fascicularis (Crab-eating macaque).